We begin with the raw amino-acid sequence, 707 residues long: Leukotoxin export ATP-binding protein LtxB (707 aa).

One can recognise a Peptidase C39 domain in the interval 4-125; it reads QKNTNLALQA…ERYQSKVILI (122 aa). H83 is a catalytic residue. Transmembrane regions (helical) follow at residues 158–178, 191–211, 269–289, 295–315, and 387–407; these read LIVS…FQVV, LNVI…LGGL, ALTS…MWYY, LVVL…SPIL, and AVMV…DLSI. Positions 158–436 constitute an ABC transmembrane type-1 domain; the sequence is LIVSIFLQIF…LAQIWQDFQQ (279 aa). In terms of domain architecture, ABC transporter spans 468 to 703; it reads ISFRNIKFRY…EKGLYSYLHQ (236 aa). 502 to 509 contributes to the ATP binding site; that stretch reads GRSGSGKS.

It belongs to the ABC transporter superfamily. Protein-1 exporter (TC 3.A.1.109) family. Probably part of a complex composed of LtxB, LtxD and TdeA, which forms a single transport channel across the two membranes.

Its subcellular location is the cell inner membrane. The catalysed reaction is ATP + H2O + proteinSide 1 = ADP + phosphate + proteinSide 2.. In terms of biological role, involved in the export of the LtxA leukotoxin. This chain is Leukotoxin export ATP-binding protein LtxB, found in Aggregatibacter actinomycetemcomitans (Actinobacillus actinomycetemcomitans).